The following is a 336-amino-acid chain: tRNA dimethylallyltransferase (336 aa).

19 to 26 (GPTASGKT) contacts ATP. Residue 21–26 (TASGKT) coordinates substrate.

The protein belongs to the IPP transferase family. As to quaternary structure, monomer. It depends on Mg(2+) as a cofactor.

It catalyses the reaction adenosine(37) in tRNA + dimethylallyl diphosphate = N(6)-dimethylallyladenosine(37) in tRNA + diphosphate. Catalyzes the transfer of a dimethylallyl group onto the adenine at position 37 in tRNAs that read codons beginning with uridine, leading to the formation of N6-(dimethylallyl)adenosine (i(6)A). The protein is tRNA dimethylallyltransferase of Bifidobacterium adolescentis (strain ATCC 15703 / DSM 20083 / NCTC 11814 / E194a).